A 359-amino-acid polypeptide reads, in one-letter code: Stearoyl-CoA desaturase (359 aa).

The Cytoplasmic portion of the chain corresponds to 1–72 (MPAHLLQEEI…EGPKPKLEYV (72 aa)). Residues 73-93 (WRNIILMSLLHLGALYGITLI) form a helical membrane-spanning segment. Asn-75 contributes to the substrate binding site. At 94 to 97 (PTCK) the chain is on the lumenal side. Residues 98-118 (IYTYIWVLFYYLMGALGITAG) form a helical membrane-spanning segment. Residues 119-217 (AHRLWSHRTY…EKLVMFQRRY (99 aa)) are Cytoplasmic-facing. Fe cation is bound by residues His-120 and His-125. The Histidine box-1 motif lies at 120–125 (HRLWSH). Substrate contacts are provided by Asn-148, Arg-155, and Asp-156. Positions 157, 160, and 161 each coordinate Fe cation. The short motif at 157-161 (HRAHH) is the Histidine box-2 element. Arg-188 and Lys-189 together coordinate substrate. Ser-198 and Ser-203 each carry phosphoserine. Residues 218–237 (YKPGVLLLCFILPTLVPWYL) traverse the membrane as a helical segment. The Lumenal portion of the chain corresponds to 238–241 (WDET). A helical membrane pass occupies residues 242–263 (FQNSLFFATLFRYALGLNVTWL). A substrate-binding site is contributed by Trp-262. Over 264 to 359 (VNSAAHMYGY…RTGEESYKSG (96 aa)) the chain is Cytoplasmic. Residues His-269, His-298, His-301, and His-302 each contribute to the Fe cation site. A Histidine box-3 motif is present at residues 298–302 (HNYHH).

This sequence belongs to the fatty acid desaturase type 1 family. Fe(2+) serves as cofactor.

The protein localises to the endoplasmic reticulum membrane. It catalyses the reaction octadecanoyl-CoA + 2 Fe(II)-[cytochrome b5] + O2 + 2 H(+) = (9Z)-octadecenoyl-CoA + 2 Fe(III)-[cytochrome b5] + 2 H2O. The catalysed reaction is hexadecanoyl-CoA + 2 Fe(II)-[cytochrome b5] + O2 + 2 H(+) = (9Z)-hexadecenoyl-CoA + 2 Fe(III)-[cytochrome b5] + 2 H2O. Its function is as follows. Stearoyl-CoA desaturase that utilizes O(2) and electrons from reduced cytochrome b5 to introduce the first double bond into saturated fatty acyl-CoA substrates. Catalyzes the insertion of a cis double bond at the delta-9 position into fatty acyl-CoA substrates including palmitoyl-CoA and stearoyl-CoA. Gives rise to a mixture of 16:1 and 18:1 unsaturated fatty acids. Plays an important role in lipid biosynthesis. Plays an important role in regulating the expression of genes that are involved in lipogenesis and in regulating mitochondrial fatty acid oxidation. Plays an important role in body energy homeostasis. Contributes to the biosynthesis of membrane phospholipids, cholesterol esters and triglycerides. The chain is Stearoyl-CoA desaturase (SCD) from Bos taurus (Bovine).